The sequence spans 484 residues: 6-phosphogluconate dehydrogenase, decarboxylating (484 aa).

Residues 11 to 16, 34 to 36, 76 to 78, and Asn104 contribute to the NADP(+) site; these read GLAVMG, NRT, and VRA. Residues Asn104 and 130–132 each bind substrate; that span reads SGG. The active-site Proton acceptor is Lys185. 188-189 contacts substrate; the sequence is HN. Glu192 acts as the Proton donor in catalysis. The substrate site is built by Tyr193, Lys262, Arg289, Arg447, and His453.

The protein belongs to the 6-phosphogluconate dehydrogenase family. As to quaternary structure, homodimer.

It catalyses the reaction 6-phospho-D-gluconate + NADP(+) = D-ribulose 5-phosphate + CO2 + NADPH. Its pathway is carbohydrate degradation; pentose phosphate pathway; D-ribulose 5-phosphate from D-glucose 6-phosphate (oxidative stage): step 3/3. Catalyzes the oxidative decarboxylation of 6-phosphogluconate to ribulose 5-phosphate and CO(2), with concomitant reduction of NADP to NADPH. This chain is 6-phosphogluconate dehydrogenase, decarboxylating (gnd), found in Haemophilus influenzae (strain ATCC 51907 / DSM 11121 / KW20 / Rd).